Consider the following 214-residue polypeptide: MRQHVNPLSQFFQLPLSLPSKNILFEKSHYPIHLDIGSAKGEFLIELATKCPDWNFVGLEIREPLVSLCEKKRRKLELTNLKFLFCNVNVSLDEWLSDLDFGQLKRVSIQFPDPWFKRKHFKRRVLKTNILNSIAKAMSKNGEIFIQSDIFELIEYMTNTIDENRYFTRKNVGDLRSINKNPYNVMTDREILSLKKNLLIYRVMYIRNSLLFTN.

4 residues coordinate S-adenosyl-L-methionine: D35, E60, N87, and D113. D113 is a catalytic residue. Substrate-binding residues include K117 and D149.

Belongs to the class I-like SAM-binding methyltransferase superfamily. TrmB family.

It catalyses the reaction guanosine(46) in tRNA + S-adenosyl-L-methionine = N(7)-methylguanosine(46) in tRNA + S-adenosyl-L-homocysteine. The protein operates within tRNA modification; N(7)-methylguanine-tRNA biosynthesis. Its function is as follows. Catalyzes the formation of N(7)-methylguanine at position 46 (m7G46) in tRNA. The chain is tRNA (guanine-N(7)-)-methyltransferase from Prochlorococcus marinus (strain NATL2A).